The sequence spans 511 residues: Cytochrome P450 89A9 (511 aa).

A helical; Signal-anchor for type II membrane protein membrane pass occupies residues 6–26 (IIFLIISSLTFSIFLKLIFFF). Position 454 (Cys454) interacts with heme.

The protein belongs to the cytochrome P450 family. It depends on heme as a cofactor.

It localises to the endoplasmic reticulum membrane. The catalysed reaction is primary fluorescent chlorophyll catabolite + reduced [NADPH--hemoprotein reductase] + O2 = primary fluorescent dioxobilin-type chlorophyll catabolite + formate + oxidized [NADPH--hemoprotein reductase] + 2 H(+). It functions in the pathway porphyrin-containing compound metabolism; chlorophyll degradation. Involved in the chlorophyll breakdown by its action in nonpolar primary fluorescent chlorophyll catabolite (pFCC) decarbonylation. Involved in the formation of major chlorophyll breakdown products, including non-fluorescent dioxobilin-type chlorophyll catabolites (NDCCs), during leaf senescence. This chain is Cytochrome P450 89A9, found in Arabidopsis thaliana (Mouse-ear cress).